We begin with the raw amino-acid sequence, 110 residues long: Large ribosomal subunit protein uL22 (110 aa).

It belongs to the universal ribosomal protein uL22 family. In terms of assembly, part of the 50S ribosomal subunit.

This protein binds specifically to 23S rRNA; its binding is stimulated by other ribosomal proteins, e.g. L4, L17, and L20. It is important during the early stages of 50S assembly. It makes multiple contacts with different domains of the 23S rRNA in the assembled 50S subunit and ribosome. Functionally, the globular domain of the protein is located near the polypeptide exit tunnel on the outside of the subunit, while an extended beta-hairpin is found that lines the wall of the exit tunnel in the center of the 70S ribosome. In Vibrio cholerae serotype O1 (strain ATCC 39541 / Classical Ogawa 395 / O395), this protein is Large ribosomal subunit protein uL22.